Consider the following 293-residue polypeptide: tRNA (guanine-N(7)-)-methyltransferase (293 aa).

Over residues 1–31 (MGGDKIKKDKRQKREDYRAAMRKDDISELPR) the composition is skewed to basic and acidic residues. Disordered stretches follow at residues 1–33 (MGGDKIKKDKRQKREDYRAAMRKDDISELPRKK) and 68–97 (IVDEPTTTSPPPPPPVPEQTPSEPDLTPLR). Over residues 75–85 (TSPPPPPPVPE) the composition is skewed to pro residues. Residues glycine 111, 134–135 (EI), 169–170 (NT), and cysteine 189 each bind S-adenosyl-L-methionine. Residue aspartate 192 is part of the active site. Residue 267–269 (TEE) coordinates S-adenosyl-L-methionine.

Belongs to the class I-like SAM-binding methyltransferase superfamily. TrmB family. Forms a complex with TRM82.

The protein localises to the nucleus. The enzyme catalyses guanosine(46) in tRNA + S-adenosyl-L-methionine = N(7)-methylguanosine(46) in tRNA + S-adenosyl-L-homocysteine. It functions in the pathway tRNA modification; N(7)-methylguanine-tRNA biosynthesis. In terms of biological role, catalyzes the formation of N(7)-methylguanine at position 46 (m7G46) in tRNA. This chain is tRNA (guanine-N(7)-)-methyltransferase, found in Chaetomium globosum (strain ATCC 6205 / CBS 148.51 / DSM 1962 / NBRC 6347 / NRRL 1970) (Soil fungus).